The chain runs to 247 residues: 7-cyano-7-deazaguanine synthase (247 aa).

F21–L31 contributes to the ATP binding site. Residues C209, C224, C227, and C230 each coordinate Zn(2+).

It belongs to the QueC family. Requires Zn(2+) as cofactor.

The enzyme catalyses 7-carboxy-7-deazaguanine + NH4(+) + ATP = 7-cyano-7-deazaguanine + ADP + phosphate + H2O + H(+). It functions in the pathway purine metabolism; 7-cyano-7-deazaguanine biosynthesis. Catalyzes the ATP-dependent conversion of 7-carboxy-7-deazaguanine (CDG) to 7-cyano-7-deazaguanine (preQ(0)). This Halorhodospira halophila (strain DSM 244 / SL1) (Ectothiorhodospira halophila (strain DSM 244 / SL1)) protein is 7-cyano-7-deazaguanine synthase.